A 417-amino-acid chain; its full sequence is Serine hydroxymethyltransferase (417 aa).

Residues Leu112 and 116 to 118 (GHL) contribute to the (6S)-5,6,7,8-tetrahydrofolate site. At Lys221 the chain carries N6-(pyridoxal phosphate)lysine. Position 247 (Glu247) interacts with (6S)-5,6,7,8-tetrahydrofolate.

It belongs to the SHMT family. As to quaternary structure, homodimer. Requires pyridoxal 5'-phosphate as cofactor.

The protein resides in the cytoplasm. It catalyses the reaction (6R)-5,10-methylene-5,6,7,8-tetrahydrofolate + glycine + H2O = (6S)-5,6,7,8-tetrahydrofolate + L-serine. The protein operates within one-carbon metabolism; tetrahydrofolate interconversion. It functions in the pathway amino-acid biosynthesis; glycine biosynthesis; glycine from L-serine: step 1/1. In terms of biological role, catalyzes the reversible interconversion of serine and glycine with tetrahydrofolate (THF) serving as the one-carbon carrier. This reaction serves as the major source of one-carbon groups required for the biosynthesis of purines, thymidylate, methionine, and other important biomolecules. Also exhibits THF-independent aldolase activity toward beta-hydroxyamino acids, producing glycine and aldehydes, via a retro-aldol mechanism. The protein is Serine hydroxymethyltransferase of Borrelia turicatae (strain 91E135).